The sequence spans 181 residues: Nucleoside-triphosphatase THEP1 (181 aa).

Residues Gly12–Ser19 and Val104–Gly111 contribute to the ATP site.

It belongs to the THEP1 NTPase family.

It catalyses the reaction a ribonucleoside 5'-triphosphate + H2O = a ribonucleoside 5'-diphosphate + phosphate + H(+). Has nucleotide phosphatase activity towards ATP, GTP, CTP, TTP and UTP. May hydrolyze nucleoside diphosphates with lower efficiency. This is Nucleoside-triphosphatase THEP1 from Thermoplasma acidophilum (strain ATCC 25905 / DSM 1728 / JCM 9062 / NBRC 15155 / AMRC-C165).